A 202-amino-acid chain; its full sequence is MSAKAATKNATKVAVKAPEATTPVETKKSKKDNVMRGLRIEKLVLNICVGESGDRLVRAAKVLEQLTGQTPVYSKARYTVRSFNIRRNEQIAAHVTVRGEKAAEILEKGLKVREFELRARNFSTQGSFGFGIQEHIDLGIKYDPSIGIYGMDFFVVLSRPGFRVAHKKRAGAKVGFQHKIGKEDAVNWFKTTYDGIVIGGKK.

Over residues Met-1–Ala-17 the composition is skewed to low complexity. Residues Met-1–Lys-30 are disordered.

It belongs to the universal ribosomal protein uL5 family. Component of the large ribosomal subunit.

Its subcellular location is the nucleus. It is found in the cytoplasm. Functionally, component of the ribosome, a large ribonucleoprotein complex responsible for the synthesis of proteins in the cell. The small ribosomal subunit (SSU) binds messenger RNAs (mRNAs) and translates the encoded message by selecting cognate aminoacyl-transfer RNA (tRNA) molecules. The large subunit (LSU) contains the ribosomal catalytic site termed the peptidyl transferase center (PTC), which catalyzes the formation of peptide bonds, thereby polymerizing the amino acids delivered by tRNAs into a polypeptide chain. The nascent polypeptides leave the ribosome through a tunnel in the LSU and interact with protein factors that function in enzymatic processing, targeting, and the membrane insertion of nascent chains at the exit of the ribosomal tunnel. The polypeptide is Large ribosomal subunit protein uL5 (rpl11) (Dictyostelium discoideum (Social amoeba)).